We begin with the raw amino-acid sequence, 361 residues long: Elongator complex protein 4 (361 aa).

2 disordered regions span residues 93–124 and 338–361; these read QLPGDSDRPNKNENSAGEDNHSSPPSKNPQQE and DDEQKDTKISNTNPQKQPVKSLDF. 2 stretches are compositionally biased toward polar residues: residues 104–121 and 346–355; these read NENSAGEDNHSSPPSKNP and ISNTNPQKQP.

Belongs to the ELP4 family. In terms of assembly, component of the elongator complex.

The protein resides in the cytoplasm. The protein localises to the nucleus. The protein operates within tRNA modification; 5-methoxycarbonylmethyl-2-thiouridine-tRNA biosynthesis. Functionally, component of the elongator complex, a multiprotein complex which is required for multiple tRNA modifications, including mcm5U (5-methoxycarbonylmethyl uridine), mcm5s2U (5-methoxycarbonylmethyl-2-thiouridine), and ncm5U (5-carbamoylmethyl uridine). The elongator complex catalyzes formation of carboxymethyluridine in the wobble base at position 34 in tRNAs. In Schizosaccharomyces pombe (strain 972 / ATCC 24843) (Fission yeast), this protein is Elongator complex protein 4.